Reading from the N-terminus, the 196-residue chain is Adenine phosphoribosyltransferase (196 aa).

Belongs to the purine/pyrimidine phosphoribosyltransferase family. As to quaternary structure, homodimer.

Its subcellular location is the cytoplasm. It carries out the reaction AMP + diphosphate = 5-phospho-alpha-D-ribose 1-diphosphate + adenine. Its pathway is purine metabolism; AMP biosynthesis via salvage pathway; AMP from adenine: step 1/1. Catalyzes a salvage reaction resulting in the formation of AMP, that is energically less costly than de novo synthesis. In Methylibium petroleiphilum (strain ATCC BAA-1232 / LMG 22953 / PM1), this protein is Adenine phosphoribosyltransferase.